The following is a 563-amino-acid chain: Eukaryotic translation initiation factor 3 subunit D-1 (563 aa).

A disordered region spans residues V98–L136. The segment covering K100–N120 has biased composition (basic residues). The interval E291–P305 is RNA gate.

This sequence belongs to the eIF-3 subunit D family. Component of the eukaryotic translation initiation factor 3 (eIF-3) complex. The eIF-3 complex interacts with pix.

It is found in the cytoplasm. Its function is as follows. mRNA cap-binding component of the eukaryotic translation initiation factor 3 (eIF-3) complex, which is involved in protein synthesis of a specialized repertoire of mRNAs and, together with other initiation factors, stimulates binding of mRNA and methionyl-tRNAi to the 40S ribosome. The eIF-3 complex specifically targets and initiates translation of a subset of mRNAs involved in cell proliferation. In the eIF-3 complex, eif3d specifically recognizes and binds the 7-methylguanosine cap of a subset of mRNAs. The sequence is that of Eukaryotic translation initiation factor 3 subunit D-1 from Drosophila pseudoobscura pseudoobscura (Fruit fly).